Reading from the N-terminus, the 875-residue chain is uncharacterized protein (875 aa).

The tract at residues proline 83–leucine 149 is disordered. A compositionally biased stretch (pro residues) spans glutamine 101–glutamine 147.

This is an uncharacterized protein from Orgyia pseudotsugata multicapsid polyhedrosis virus (OpMNPV).